A 377-amino-acid polypeptide reads, in one-letter code: NADH dehydrogenase [ubiquinone] 1 alpha subcomplex subunit 9, mitochondrial (377 aa).

Residues 1 to 35 (MAAAVRFQVVRALPMSRPAISAAATSVFCSSSHRQ) constitute a mitochondrion transit peptide. K175 is modified (N6-succinyllysine). 2 positions are modified to N6-acetyllysine: K189 and K370.

This sequence belongs to the complex I NDUFA9 subunit family. Complex I is composed of 45 different subunits. This a component of the hydrophobic protein fraction. Interacts with BLOC1S1. Interacts with SLC2A4. Interacts with CLOCK. Interacts with RAB5IF. The cofactor is FAD. Acetylated on lysine residues. BLOC1S1 is required for acetylation. Acetylated by CLOCK in a circadian manner. Expressed by the principal cells of the epididymis. Detected in flagella of epididymal sperm (at protein level).

Its subcellular location is the mitochondrion matrix. Accessory subunit of the mitochondrial membrane respiratory chain NADH dehydrogenase (Complex I), that is believed not to be involved in catalysis. Complex I functions in the transfer of electrons from NADH to the respiratory chain. The immediate electron acceptor for the enzyme is believed to be ubiquinone. This chain is NADH dehydrogenase [ubiquinone] 1 alpha subcomplex subunit 9, mitochondrial, found in Rattus norvegicus (Rat).